Here is a 343-residue protein sequence, read N- to C-terminus: Allantoicase (343 aa).

The protein belongs to the allantoicase family.

The catalysed reaction is allantoate + H2O = (S)-ureidoglycolate + urea. It functions in the pathway nitrogen metabolism; (S)-allantoin degradation; (S)-ureidoglycolate from allantoate (aminidohydrolase route): step 1/1. In terms of biological role, utilization of purines as secondary nitrogen sources, when primary sources are limiting. The chain is Allantoicase (DAL2) from Saccharomyces cerevisiae (strain ATCC 204508 / S288c) (Baker's yeast).